A 416-amino-acid polypeptide reads, in one-letter code: Serine hydroxymethyltransferase (416 aa).

Residues Leu-118 and Gly-122–Leu-124 each bind (6S)-5,6,7,8-tetrahydrofolate. N6-(pyridoxal phosphate)lysine is present on Lys-227. (6S)-5,6,7,8-tetrahydrofolate is bound by residues Glu-242 and Ser-350 to Phe-352.

It belongs to the SHMT family. As to quaternary structure, homodimer. The cofactor is pyridoxal 5'-phosphate.

It localises to the cytoplasm. The catalysed reaction is (6R)-5,10-methylene-5,6,7,8-tetrahydrofolate + glycine + H2O = (6S)-5,6,7,8-tetrahydrofolate + L-serine. It functions in the pathway one-carbon metabolism; tetrahydrofolate interconversion. It participates in amino-acid biosynthesis; glycine biosynthesis; glycine from L-serine: step 1/1. Catalyzes the reversible interconversion of serine and glycine with tetrahydrofolate (THF) serving as the one-carbon carrier. This reaction serves as the major source of one-carbon groups required for the biosynthesis of purines, thymidylate, methionine, and other important biomolecules. Also exhibits THF-independent aldolase activity toward beta-hydroxyamino acids, producing glycine and aldehydes, via a retro-aldol mechanism. The protein is Serine hydroxymethyltransferase of Syntrophotalea carbinolica (strain DSM 2380 / NBRC 103641 / GraBd1) (Pelobacter carbinolicus).